The sequence spans 739 residues: DNA ligase (739 aa).

NAD(+)-binding positions include 34-38 (DADYD), 83-84 (SL), and Glu-117. The active-site N6-AMP-lysine intermediate is Lys-119. The NAD(+) site is built by Arg-140, Glu-175, Lys-291, and Lys-315. Positions 420, 423, 438, and 444 each coordinate Zn(2+). The 80-residue stretch at 660 to 739 (ADDSPVAGKT…DGWLDLIGQA (80 aa)) folds into the BRCT domain.

It belongs to the NAD-dependent DNA ligase family. LigA subfamily. Mg(2+) serves as cofactor. The cofactor is Mn(2+).

It carries out the reaction NAD(+) + (deoxyribonucleotide)n-3'-hydroxyl + 5'-phospho-(deoxyribonucleotide)m = (deoxyribonucleotide)n+m + AMP + beta-nicotinamide D-nucleotide.. Functionally, DNA ligase that catalyzes the formation of phosphodiester linkages between 5'-phosphoryl and 3'-hydroxyl groups in double-stranded DNA using NAD as a coenzyme and as the energy source for the reaction. It is essential for DNA replication and repair of damaged DNA. The chain is DNA ligase from Ruegeria sp. (strain TM1040) (Silicibacter sp.).